The following is a 405-amino-acid chain: Exodeoxyribonuclease 7 large subunit (405 aa).

This sequence belongs to the XseA family. Heterooligomer composed of large and small subunits.

Its subcellular location is the cytoplasm. It carries out the reaction Exonucleolytic cleavage in either 5'- to 3'- or 3'- to 5'-direction to yield nucleoside 5'-phosphates.. Bidirectionally degrades single-stranded DNA into large acid-insoluble oligonucleotides, which are then degraded further into small acid-soluble oligonucleotides. This chain is Exodeoxyribonuclease 7 large subunit, found in Halothermothrix orenii (strain H 168 / OCM 544 / DSM 9562).